A 44-amino-acid chain; its full sequence is Phosphatase RapA inhibitor (44 aa).

Residues 1–39 (MKSKWMSGLLLVAVGFSFTQVMVHAGETANTEGKTFHIA) constitute a propeptide that is removed on maturation.

The protein belongs to the Phr family. Interacts with RapA and inhibits its interaction with Spo0F. Secreted with a propeptide domain, which is cleaved in the cell wall by the secreted serine proteases subtilisin and Vpr to produce a mature signaling peptide. Contains a predicted signal peptide cleavage site in the N-terminal region, however the propeptide is probably subject to only one processing event, at the N-terminal end of the mature peptide.

It localises to the secreted. It is found in the cytoplasm. With respect to regulation, inhibition of RapA requires a free carboxylate group at the C-terminal end of the PhrA pentapeptide. A free C-terminal carboxylic acid PhrA pentapeptide inhibits RapA phosphatase activity at a 1:1 ratio and is approximately 200 fold more active than a C-terminal amide peptide. Functionally, signaling molecule involved in the regulation of sporulation. Secreted during production, but the mature peptide acts intracellularly, indicating that it needs to be imported into the cell to function. Inhibitor of the RapA phosphatase activity. Does not act on RapB. The sequence is that of Phosphatase RapA inhibitor from Bacillus subtilis (strain 168).